The sequence spans 638 residues: Neuroendocrine convertase 2 (638 aa).

Positions 1-25 (MRGGCISQGKAAAGLLFCVMVFASA) are cleaved as a signal peptide. Positions 26-109 (ERPVFTNHFL…QQEGFNRKKR (84 aa)) are excised as a propeptide. In terms of domain architecture, Peptidase S8 spans 129-453 (QWYLINTGQA…YGVLDAGAMV (325 aa)). Residues Asp-167 and His-208 each act as charge relay system in the active site. Cystine bridges form between Cys-225/Cys-376 and Cys-317/Cys-347. Residue Asn-375 is glycosylated (N-linked (GlcNAc...) asparagine). Residue Ser-384 is the Charge relay system of the active site. Residues 461 to 597 (TVPERFHCVG…TLMLHGTQSA (137 aa)) enclose the P/Homo B domain. An intrachain disulfide couples Cys-468 to Cys-494. N-linked (GlcNAc...) asparagine glycans are attached at residues Asn-514 and Asn-524.

The protein belongs to the peptidase S8 family. Furin subfamily.

The protein localises to the cytoplasmic vesicle. It is found in the secretory vesicle. Its subcellular location is the secreted. It catalyses the reaction Release of protein hormones and neuropeptides from their precursors, generally by hydrolysis of -Lys-Arg-|- bonds.. Functionally, serine endopeptidase which is involved in the processing of hormone and other protein precursors at sites comprised of pairs of basic amino acid residues. Responsible for the release of glucagon from proglucagon in pancreatic A cells. In Bos taurus (Bovine), this protein is Neuroendocrine convertase 2 (PCSK2).